The following is a 478-amino-acid chain: UDP-N-acetylmuramate--L-alanine ligase (478 aa).

Position 120-126 (120-126 (GSHGKTT)) interacts with ATP.

This sequence belongs to the MurCDEF family.

The protein resides in the cytoplasm. It carries out the reaction UDP-N-acetyl-alpha-D-muramate + L-alanine + ATP = UDP-N-acetyl-alpha-D-muramoyl-L-alanine + ADP + phosphate + H(+). It functions in the pathway cell wall biogenesis; peptidoglycan biosynthesis. Functionally, cell wall formation. In Rickettsia felis (strain ATCC VR-1525 / URRWXCal2) (Rickettsia azadi), this protein is UDP-N-acetylmuramate--L-alanine ligase.